We begin with the raw amino-acid sequence, 377 residues long: Nitric oxide reductase FlRd-NAD(+) reductase (377 aa).

Belongs to the FAD-dependent oxidoreductase family. Requires FAD as cofactor.

The protein localises to the cytoplasm. It catalyses the reaction 2 reduced [nitric oxide reductase rubredoxin domain] + NAD(+) + H(+) = 2 oxidized [nitric oxide reductase rubredoxin domain] + NADH. It participates in nitrogen metabolism; nitric oxide reduction. In terms of biological role, one of at least two accessory proteins for anaerobic nitric oxide (NO) reductase. Reduces the rubredoxin moiety of NO reductase. The sequence is that of Nitric oxide reductase FlRd-NAD(+) reductase from Citrobacter koseri (strain ATCC BAA-895 / CDC 4225-83 / SGSC4696).